The chain runs to 389 residues: 5-hydroxytryptamine receptor 1B (389 aa).

The Extracellular segment spans residues 1–45 (MGNPEASCTPPAVLGSQTGLPHANVSAPPNNCSAPSHIYQDSIAL). 2 N-linked (GlcNAc...) asparagine glycosylation sites follow: N24 and N31. A helical transmembrane segment spans residues 46-71 (PWKVLLVVLLALITLATTLSNAFVIA). Residues 72–85 (TVYRTRKLHTPANY) lie on the Cytoplasmic side of the membrane. Residues 86-110 (LIASLAFTDLLVSILVMPISTMYTV) form a helical membrane-spanning segment. Over 111 to 118 (TGRWTLGQ) the chain is Extracellular. The chain crosses the membrane as a helical span at residues 119–144 (ALCDFWLSSDITCCTASIMHLCVIAL). An intrachain disulfide couples C121 to C198. D128 and T133 together coordinate ergotamine. Positions 145–147 (DRY) match the DRY motif; important for ligand-induced conformation changes and signaling motif. Over 145–164 (DRYWAITDAVGYSAKRTPRR) the chain is Cytoplasmic. Residues 165–183 (AAGMIALVWVFSICISLPP) form a helical membrane-spanning segment. The Extracellular segment spans residues 184 to 204 (FFWRQAKAEEEVLDCLVNTDH). Residue V200 coordinates ergotamine. Residues 205–228 (VLYTVYSTGGAFYLPTLLLIALYG) traverse the membrane as a helical segment. The Cytoplasmic segment spans residues 229–314 (RIYVEARSRI…AARERKATKT (86 aa)). A helical transmembrane segment spans residues 315–336 (LGVILGAFIVCWLPFFIISLVM). Over 337 to 346 (PICKDACWFH) the chain is Extracellular. A helical transmembrane segment spans residues 347–369 (MAIFDFFTWLGYLNSLINPIIYT). Positions 364-368 (NPIIY) match the NPxxY motif; important for ligand-induced conformation changes and signaling motif. The Cytoplasmic segment spans residues 370–389 (MSNEDFKQAFHKLIRFKCTT). The S-palmitoyl cysteine moiety is linked to residue C387.

It belongs to the G-protein coupled receptor 1 family. Homodimer. Heterodimer with HTR1D. In terms of processing, phosphorylated. Desensitization of the receptor may be mediated by its phosphorylation. Post-translationally, palmitoylated.

It localises to the cell membrane. In terms of biological role, G-protein coupled receptor for 5-hydroxytryptamine (serotonin). Also functions as a receptor for ergot alkaloid derivatives, various anxiolytic and antidepressant drugs and other psychoactive substances, such as lysergic acid diethylamide (LSD). Ligand binding causes a conformation change that triggers signaling via guanine nucleotide-binding proteins (G proteins) and modulates the activity of downstream effectors, such as adenylate cyclase. HTR1B is coupled to G(i)/G(o) G alpha proteins and mediates inhibitory neurotransmission by inhibiting adenylate cyclase activity. Arrestin family members inhibit signaling via G proteins and mediate activation of alternative signaling pathways. Regulates the release of 5-hydroxytryptamine, dopamine and acetylcholine in the brain, and thereby affects neural activity, nociceptive processing, pain perception, mood and behavior. Besides, plays a role in vasoconstriction of cerebral arteries. This chain is 5-hydroxytryptamine receptor 1B (HTR1B), found in Cavia porcellus (Guinea pig).